The chain runs to 33 residues: Photosystem II reaction center protein Psb30 (33 aa).

A helical transmembrane segment spans residues 5–25 (LIVQLTSLALITLAGPLIVAL).

This sequence belongs to the Psb30/Ycf12 family. PSII is composed of 1 copy each of membrane proteins PsbA, PsbB, PsbC, PsbD, PsbE, PsbF, PsbH, PsbI, PsbJ, PsbK, PsbL, PsbM, PsbT, PsbY, PsbZ, Psb30/Ycf12, peripheral proteins of the oxygen-evolving complex and a large number of cofactors. It forms dimeric complexes.

The protein localises to the plastid. It is found in the chloroplast thylakoid membrane. In terms of biological role, a core subunit of photosystem II (PSII), probably helps stabilize the reaction center. The polypeptide is Photosystem II reaction center protein Psb30 (Euglena sanguinea).